A 287-amino-acid polypeptide reads, in one-letter code: mRNA-capping enzyme regulatory subunit (287 aa).

The protein belongs to the chordopoxvirinae mRNA-capping enzyme regulatory subunit family. Heterodimer of a catalytic and a regulatory subunit. Intrinsic methyltransferase activity of the catalytic subunit is weak and needs to be stimulated 30- to 50-fold by the regulatory subunit, which is itself catalytically inert.

The protein localises to the virion. Functionally, regulatory subunit of the mRNA cap enzyme which stabilizes the catalytic subunit and enhances its methyltransferase activity through an allosteric mechanism. Heterodimeric mRNA capping enzyme catalyzes the linkage of a N7-methyl-guanosine moiety to the first transcribed nucleotide (cap 0 structure), whereas the polymerase associated VP39 is responsible for a second methylation at the 2'-O position of the ribose (cap 1 structure). In terms of biological role, the heterodimeric enzyme is also involved in early viral gene transcription termination and intermediate viral gene transcription initiation. Early gene transcription termination requires the termination factor VTF, the DNA-dependent ATPase NPH-I and the Rap94 subunit of the viral RNA polymerase, as well as the presence of a specific termination motif. Binds, together with RAP94, to the termination motif 5'-UUUUUNU-3' in the nascent early mRNA. This chain is mRNA-capping enzyme regulatory subunit, found in Vaccinia virus (strain Ankara) (VACV).